Reading from the N-terminus, the 503-residue chain is Plant-specific TFIIB-related protein 1 (503 aa).

Residues 1–33 (MKCPYCSSAQGRCTTTSSGRSITECSSCGRVME) form a TFIIB-type zinc finger. Disordered regions lie at residues 328 to 366 (PEKAFPTTTISTTRSTTPRAVDPPEPSFVEKDKPSAKPI), 411 to 431 (NAMDYEKQQLDKQQQQQLGDK), 436 to 455 (IYLRDHNPFPSNPSPSTGIS), and 468 to 503 (GSSSNLPVIHPPKLPPGYAEIRGSGSRNADNPHGDF). The span at 333 to 346 (PTTTISTTRSTTPR) shows a compositional bias: low complexity. The segment covering 355–366 (FVEKDKPSAKPI) has biased composition (basic and acidic residues).

Post-translationally, ubiquinated. Subsequent degradation by the proteasome pathway. Widely expressed.

The protein localises to the plastid. The protein resides in the chloroplast outer membrane. It localises to the nucleus. Plant-specific TFIIB-related protein that may be involved in an intracellular signaling pathway between plastids and the nucleus. May act as general transcription factor (GTF) of RNA polymerase I-dependent transcription and rRNA synthesis. Forms a ternary complex with TBP2 and the rDNA promoter region. The protein is Plant-specific TFIIB-related protein 1 of Arabidopsis thaliana (Mouse-ear cress).